The following is a 22-amino-acid chain: Zinc metalloproteinase oxiagin (22 aa).

The Peptidase M12B domain occupies 14-22; sequence CYIEFYVVV.

This sequence belongs to the venom metalloproteinase (M12B) family. P-III subfamily. P-IIId sub-subfamily. As to quaternary structure, heterotrimer; disulfide-linked. The heterotrimer consists of 1 metalloproteinase chain and 2 lectin chains. The cofactor is Zn(2+). N-glycosylated. Expressed by the venom gland.

The protein resides in the secreted. Its function is as follows. Snake venom metalloproteinase that inhibits the classical complement pathway dose-dependently. It acts by binding to carbohydrates of IgG within the antibody-sensitized sheep erythrocytes (EA) complex, and thus prevents interaction of component C2 with immobilized C4b. Also induces cation-independent hemagglutination that can be prevented by D-galactose pretreatment. This Naja oxiana (Central Asian cobra) protein is Zinc metalloproteinase oxiagin.